The primary structure comprises 389 residues: Trans-2-enoyl-CoA reductase [NADH] (389 aa).

Residues 47–52, 73–74, 110–111, and 138–139 each bind NAD(+); these read GASTGY, FE, DA, and LA. Tyr-224 is a substrate binding site. The active-site Proton donor is Tyr-234. Residues Lys-243 and 272 to 274 each bind NAD(+); that span reads LVT.

Belongs to the TER reductase family. Monomer.

It catalyses the reaction a 2,3-saturated acyl-CoA + NAD(+) = a (2E)-enoyl-CoA + NADH + H(+). Its pathway is lipid metabolism; fatty acid biosynthesis. In terms of biological role, involved in the fatty acid synthesis (FAS II). Catalyzes the reduction of a carbon-carbon double bond in an enoyl moiety that is covalently linked to a coenzyme A (CoA). The polypeptide is Trans-2-enoyl-CoA reductase [NADH] (Clostridium perfringens (strain ATCC 13124 / DSM 756 / JCM 1290 / NCIMB 6125 / NCTC 8237 / Type A)).